A 562-amino-acid polypeptide reads, in one-letter code: Protoporphyrinogen oxidase 1, chloroplastic (562 aa).

A chloroplast-targeting transit peptide spans 1–48; sequence MSAMALSSTMALSLPQSSMSLSHCRHNRITILIPSSSLRRRGGSSIRC. FAD-binding positions include 88 to 93, 115 to 116, and 137 to 140; these read GGGISG, EA, and GPNS. Residues 274–302 form a disordered region; that stretch reads TLKTIQERKDNPKPPRDPRLPKPKGQTVG. Over residues 278–293 the composition is skewed to basic and acidic residues; it reads IQERKDNPKPPRDPRL. FAD contacts are provided by residues Val323 and 536 to 538; that span reads VAL.

Belongs to the protoporphyrinogen/coproporphyrinogen oxidase family. Protoporphyrinogen oxidase subfamily. Requires FAD as cofactor.

Its subcellular location is the plastid. It localises to the chloroplast thylakoid membrane. The protein localises to the chloroplast inner membrane. The enzyme catalyses protoporphyrinogen IX + 3 O2 = protoporphyrin IX + 3 H2O2. The protein operates within porphyrin-containing compound metabolism; protoporphyrin-IX biosynthesis; protoporphyrin-IX from protoporphyrinogen-IX: step 1/1. Its pathway is porphyrin-containing compound metabolism; chlorophyll biosynthesis. Its function is as follows. Catalyzes the 6-electron oxidation of protoporphyrinogen-IX to form protoporphyrin-IX. This chain is Protoporphyrinogen oxidase 1, chloroplastic, found in Spinacia oleracea (Spinach).